Consider the following 271-residue polypeptide: Phosphatidylglycerol--prolipoprotein diacylglyceryl transferase (271 aa).

A run of 7 helical transmembrane segments spans residues 21-41 (ISVR…MWLA), 60-80 (LLFA…VLFY), 95-115 (VWTG…AMLW), 124-144 (FFGV…VGRL), 176-196 (SQLY…NWFI), 203-223 (GSVS…VEYV), and 230-250 (LGLF…MIIG). Position 143 (Arg-143) interacts with a 1,2-diacyl-sn-glycero-3-phospho-(1'-sn-glycerol).

This sequence belongs to the Lgt family.

It localises to the cell inner membrane. The enzyme catalyses L-cysteinyl-[prolipoprotein] + a 1,2-diacyl-sn-glycero-3-phospho-(1'-sn-glycerol) = an S-1,2-diacyl-sn-glyceryl-L-cysteinyl-[prolipoprotein] + sn-glycerol 1-phosphate + H(+). It participates in protein modification; lipoprotein biosynthesis (diacylglyceryl transfer). Catalyzes the transfer of the diacylglyceryl group from phosphatidylglycerol to the sulfhydryl group of the N-terminal cysteine of a prolipoprotein, the first step in the formation of mature lipoproteins. The chain is Phosphatidylglycerol--prolipoprotein diacylglyceryl transferase from Vibrio vulnificus (strain CMCP6).